A 646-amino-acid polypeptide reads, in one-letter code: Elongation factor 4 (646 aa).

Residues 42–227 (AQIRNFCIIA…EVVRRVPHPQ (186 aa)) enclose the tr-type G domain. Residues 54–59 (DHGKST) and 174–177 (NKID) contribute to the GTP site.

The protein belongs to the TRAFAC class translation factor GTPase superfamily. Classic translation factor GTPase family. LepA subfamily.

It localises to the cell membrane. The catalysed reaction is GTP + H2O = GDP + phosphate + H(+). In terms of biological role, required for accurate and efficient protein synthesis under certain stress conditions. May act as a fidelity factor of the translation reaction, by catalyzing a one-codon backward translocation of tRNAs on improperly translocated ribosomes. Back-translocation proceeds from a post-translocation (POST) complex to a pre-translocation (PRE) complex, thus giving elongation factor G a second chance to translocate the tRNAs correctly. Binds to ribosomes in a GTP-dependent manner. This Mycobacterium leprae (strain Br4923) protein is Elongation factor 4.